Consider the following 863-residue polypeptide: DNA mismatch repair protein MutS (863 aa).

607–614 contacts ATP; it reads GPNMAGKS.

It belongs to the DNA mismatch repair MutS family.

This protein is involved in the repair of mismatches in DNA. It is possible that it carries out the mismatch recognition step. This protein has a weak ATPase activity. This chain is DNA mismatch repair protein MutS, found in Caldicellulosiruptor saccharolyticus (strain ATCC 43494 / DSM 8903 / Tp8T 6331).